The primary structure comprises 872 residues: Leucine--tRNA ligase (872 aa).

The short motif at Pro42–His52 is the 'HIGH' region element. The 'KMSKS' region motif lies at Lys631–Ser635. Lys634 provides a ligand contact to ATP.

This sequence belongs to the class-I aminoacyl-tRNA synthetase family.

The protein localises to the cytoplasm. It carries out the reaction tRNA(Leu) + L-leucine + ATP = L-leucyl-tRNA(Leu) + AMP + diphosphate. The polypeptide is Leucine--tRNA ligase (Blochmanniella pennsylvanica (strain BPEN)).